The sequence spans 335 residues: Transaldolase (335 aa).

S2 is subject to N-acetylserine. Catalysis depends on K144, which acts as the Schiff-base intermediate with substrate.

This sequence belongs to the transaldolase family. Type 1 subfamily. As to quaternary structure, homodimer.

It carries out the reaction D-sedoheptulose 7-phosphate + D-glyceraldehyde 3-phosphate = D-erythrose 4-phosphate + beta-D-fructose 6-phosphate. The protein operates within carbohydrate degradation; pentose phosphate pathway; D-glyceraldehyde 3-phosphate and beta-D-fructose 6-phosphate from D-ribose 5-phosphate and D-xylulose 5-phosphate (non-oxidative stage): step 2/3. Transaldolase is important for the balance of metabolites in the pentose-phosphate pathway. This Saccharomyces cerevisiae (strain ATCC 204508 / S288c) (Baker's yeast) protein is Transaldolase (TAL1).